Consider the following 375-residue polypeptide: Alcohol dehydrogenase 1C (375 aa).

Ser2 carries the N-acetylserine modification. Ser23 is modified (phosphoserine). Zn(2+) contacts are provided by Cys47, His68, Cys98, Cys101, Cys104, Cys112, and Cys175. Residues 200 to 205 (GLGGVG), Asp224, Lys229, Ile270, 293 to 295 (VGV), 318 to 320 (AIF), and Arg370 each bind NAD(+).

The protein belongs to the zinc-containing alcohol dehydrogenase family. Dimer of identical or non-identical chains of class I alcohol dehydrogenase: ADH1A, ADH1B, and ADH1C. Requires Zn(2+) as cofactor. Expressed in kidney.

The protein localises to the cytoplasm. The catalysed reaction is a primary alcohol + NAD(+) = an aldehyde + NADH + H(+). It catalyses the reaction ethanol + NAD(+) = acetaldehyde + NADH + H(+). Functionally, alcohol dehydrogenase. Exhibits high activity for ethanol oxidation and plays a major role in ethanol catabolism. The protein is Alcohol dehydrogenase 1C (ADH1C) of Papio hamadryas (Hamadryas baboon).